Reading from the N-terminus, the 775-residue chain is Kazrin (775 aa).

Residues 38–66 (AELSGGGGPGPGPGAAASASAAGDSAATN) form a disordered region. The segment covering 51-64 (GAAASASAAGDSAA) has biased composition (low complexity). Positions 74–256 (AQVLLREEVS…LATLTKDVPK (183 aa)) form a coiled coil. The interval 174–333 (RDFIRNYEQH…SAAEGDRSST (160 aa)) is interaction with PPL. The segment at 290-427 (QQTLYHSHPP…QSLSLSEGEE (138 aa)) is disordered. Phosphoserine occurs at positions 352, 367, and 387. The segment covering 411–422 (SQCSPTRQSLSL) has biased composition (polar residues). 3 consecutive SAM domains span residues 446 to 511 (WKAG…YRDA), 524 to 588 (DHHW…LYQV), and 612 to 679 (WTNQ…SAVF). 2 disordered regions span residues 688–715 (REAE…SSGL) and 729–762 (RGFS…LEQC). Residues 732 to 742 (SSKDPDFHDDY) show a composition bias toward basic and acidic residues.

It belongs to the kazrin family. In terms of assembly, isoform 2, isoform 3 and isoform 4 interact with PPL N-terminus. As to expression, isoform 2, isoform 3 and isoform 4 are expressed in several cell lines including keratinocytes and bladder and epidermoid carcinoma (at protein level). Isoform 2, isoform 3 and isoform 4 are expressed in hair follicle and interfollicular epidermis (at protein level).

The protein resides in the cytoplasm. It is found in the cytoskeleton. It localises to the cell junction. Its subcellular location is the desmosome. The protein localises to the nucleus. Functionally, component of the cornified envelope of keratinocytes. May be involved in the interplay between adherens junctions and desmosomes. The function in the nucleus is not known. This is Kazrin from Homo sapiens (Human).